Here is a 224-residue protein sequence, read N- to C-terminus: uncharacterized protein (224 aa).

The segment at 11 to 42 (YYCKYCQIFVKDTPFARRSHEQTYKHQDAIKK) adopts a Matrin-type zinc-finger fold. A compositionally biased stretch (low complexity) spans 67-80 (ATATTASAVSSELA). Disordered regions lie at residues 67 to 158 (ATAT…RNRE) and 172 to 224 (VKPK…YDQS). Residues 87 to 98 (KEHPKLRPSKKK) show a composition bias toward basic residues. The segment covering 108-122 (TSSTETDTISTTHTS) has biased composition (low complexity). The span at 175–199 (KNLDKVPKLAENEGNKSLESKESNE) shows a compositional bias: basic and acidic residues. Over residues 203–216 (VFKKKKSGKLRTKS) the composition is skewed to basic residues.

Its subcellular location is the nucleus. It localises to the nucleolus. This is an uncharacterized protein from Schizosaccharomyces pombe (strain 972 / ATCC 24843) (Fission yeast).